A 141-amino-acid polypeptide reads, in one-letter code: Large ribosomal subunit protein uL11 (141 aa).

This sequence belongs to the universal ribosomal protein uL11 family. In terms of assembly, part of the ribosomal stalk of the 50S ribosomal subunit. Interacts with L10 and the large rRNA to form the base of the stalk. L10 forms an elongated spine to which L12 dimers bind in a sequential fashion forming a multimeric L10(L12)X complex. One or more lysine residues are methylated.

Functionally, forms part of the ribosomal stalk which helps the ribosome interact with GTP-bound translation factors. In Streptococcus pneumoniae (strain Hungary19A-6), this protein is Large ribosomal subunit protein uL11.